The sequence spans 164 residues: Thiol peroxidase (164 aa).

Positions 17-162 constitute a Thioredoxin domain; the sequence is IKVGDTFPDF…YDEVLQAAQA (146 aa). Residue C58 is the Cysteine sulfenic acid (-SOH) intermediate of the active site. C58 and C92 are disulfide-bonded.

The protein belongs to the peroxiredoxin family. Tpx subfamily. In terms of assembly, homodimer.

The catalysed reaction is a hydroperoxide + [thioredoxin]-dithiol = an alcohol + [thioredoxin]-disulfide + H2O. Thiol-specific peroxidase that catalyzes the reduction of hydrogen peroxide and organic hydroperoxides to water and alcohols, respectively. Plays a role in cell protection against oxidative stress by detoxifying peroxides. This is Thiol peroxidase from Clostridium acetobutylicum (strain ATCC 824 / DSM 792 / JCM 1419 / IAM 19013 / LMG 5710 / NBRC 13948 / NRRL B-527 / VKM B-1787 / 2291 / W).